Reading from the N-terminus, the 240-residue chain is Tetrahydromethanopterin S-methyltransferase subunit A (240 aa).

At 1–218 (MAEKREPAAG…KFHAGVHAGK (218 aa)) the chain is on the cytoplasmic side. Residue His85 coordinates 5-hydroxybenzimidazolylcob(I)amide. The helical transmembrane segment at 219 to 239 (FEGIMIGLAITLSLLGLILFG) threads the bilayer. Residue Arg240 is a topological domain, extracellular.

It belongs to the MtrA family. The complex is composed of 8 subunits; MtrA, MtrB, MtrC, MtrD, MtrE, MtrF, MtrG and MtrH. 5-hydroxybenzimidazolylcob(I)amide serves as cofactor.

The protein resides in the cell membrane. It carries out the reaction 5-methyl-5,6,7,8-tetrahydromethanopterin + coenzyme M + 2 Na(+)(in) = 5,6,7,8-tetrahydromethanopterin + methyl-coenzyme M + 2 Na(+)(out). It participates in one-carbon metabolism; methanogenesis from CO(2); methyl-coenzyme M from 5,10-methylene-5,6,7,8-tetrahydromethanopterin: step 2/2. Its function is as follows. Part of a complex that catalyzes the formation of methyl-coenzyme M and tetrahydromethanopterin from coenzyme M and methyl-tetrahydromethanopterin. This is an energy-conserving, sodium-ion translocating step. The sequence is that of Tetrahydromethanopterin S-methyltransferase subunit A from Methanohalophilus mahii (strain ATCC 35705 / DSM 5219 / SLP).